A 402-amino-acid chain; its full sequence is Succinyl-CoA--D-citramalate CoA-transferase (402 aa).

Residue Asp-174 is the Nucleophile of the active site.

It belongs to the CoA-transferase III family. In terms of assembly, homodimer.

The enzyme catalyses (3R)-citramalate + succinyl-CoA = (3R)-citramalyl-CoA + succinate. The catalysed reaction is (R)-malate + succinyl-CoA = (R)-malyl-CoA + succinate. Its function is as follows. Involved in the 3-hydroxypropionate cycle used for autotrophic carbon dioxide fixation, and in the glyoxylate assimilation cycle used to regenerate acetyl-CoA and produce pyruvate as universal precursor for biosynthesis. Catalyzes the transfer of CoA moiety from succinyl-CoA to D-citramalate to yield citramalyl-CoA. The protein is Succinyl-CoA--D-citramalate CoA-transferase of Chloroflexus aurantiacus (strain ATCC 29366 / DSM 635 / J-10-fl).